We begin with the raw amino-acid sequence, 404 residues long: MSTFPAPVLGTPLSPTATRVMLLGAGELGKEVVIALQRLGVEVIAVDRYADAPGHQVAHRAHVVSMTDPQALRQVIEQERPHVVVPEIEAIATDLLVALEDEGAVHVTPTARAAHLTMNREGIRRLAAETLGLPTSPYRFVDTEQALREAIDGGIGYPCVIKPVMSSSGKGQSIIRSADDIAAAWRYAQEGGRVGAGRVIVEGFIEFDYEITLLTVRARGADGQIVTQFCEPIGHRQVDGDYVESWQPHPMSPVALQRSREIALAVTGDLGGLGIFGVELFVAGDQVWFSEVSPRPHDTGMVTLISQVQNEFELHARALLGLPVDTRLRQPGASSVIYGGVDARGVAFEGVAQALAEPGTDIRLFGKPESYAKRRMGVGLAVADDVDQARAKAARVSQAVRVRA.

Residues 27-28 (EL) and glutamate 87 contribute to the N(1)-(5-phospho-beta-D-ribosyl)glycinamide site. Residues arginine 120, lysine 162, 167-172 (SSGKGQ), 202-205 (EGFI), and glutamate 210 contribute to the ATP site. Residues 125–320 (RLAAETLGLP…EFELHARALL (196 aa)) form the ATP-grasp domain. Glutamate 279 and glutamate 291 together coordinate Mg(2+). Residues aspartate 298, lysine 367, and 374–375 (RR) contribute to the N(1)-(5-phospho-beta-D-ribosyl)glycinamide site.

The protein belongs to the PurK/PurT family. In terms of assembly, homodimer.

The enzyme catalyses N(1)-(5-phospho-beta-D-ribosyl)glycinamide + formate + ATP = N(2)-formyl-N(1)-(5-phospho-beta-D-ribosyl)glycinamide + ADP + phosphate + H(+). It participates in purine metabolism; IMP biosynthesis via de novo pathway; N(2)-formyl-N(1)-(5-phospho-D-ribosyl)glycinamide from N(1)-(5-phospho-D-ribosyl)glycinamide (formate route): step 1/1. Its function is as follows. Involved in the de novo purine biosynthesis. Catalyzes the transfer of formate to 5-phospho-ribosyl-glycinamide (GAR), producing 5-phospho-ribosyl-N-formylglycinamide (FGAR). Formate is provided by PurU via hydrolysis of 10-formyl-tetrahydrofolate. The polypeptide is Formate-dependent phosphoribosylglycinamide formyltransferase (Bordetella pertussis (strain Tohama I / ATCC BAA-589 / NCTC 13251)).